A 407-amino-acid polypeptide reads, in one-letter code: uncharacterized protein (407 aa).

At 1 to 290 the chain is on the lumenal side; it reads MPLNIIGTAL…SNSLRRVISN (290 aa). NADP(+) contacts are provided by aspartate 114, lysine 236, and serine 281. The Lowers pKa of active site Tyr role is filled by lysine 236. A helical transmembrane segment spans residues 291–311; it reads GSVVLLIILYCILLYPILWLF. Residues 312–407 lie on the Cytoplasmic side of the membrane; sequence TKSGRRGDQS…KSQNKSRKDD (96 aa). Residues 361 to 390 adopt a coiled-coil conformation; sequence ELQKKLFDNTERDILQLEKKVAAKRNANKT. The tract at residues 383 to 407 is disordered; that stretch reads AKRNANKTGNQNSKKKSQNKSRKDD. The segment covering 395 to 407 has biased composition (basic residues); sequence SKKKSQNKSRKDD.

The protein belongs to the short-chain dehydrogenases/reductases (SDR) family.

It is found in the endoplasmic reticulum membrane. May be involved in lipid metabolism. This is an uncharacterized protein from Saccharomyces cerevisiae (strain ATCC 204508 / S288c) (Baker's yeast).